The following is a 974-amino-acid chain: Bifunctional glutamine synthetase adenylyltransferase/adenylyl-removing enzyme (974 aa).

An adenylyl removase region spans residues 1–464 (MKNAFLKTHL…HYAALFENEQ (464 aa)). An adenylyl transferase region spans residues 468-974 (LEIGNLVFTG…CSIFKQIMKH (507 aa)).

It belongs to the GlnE family. Requires Mg(2+) as cofactor.

The catalysed reaction is [glutamine synthetase]-O(4)-(5'-adenylyl)-L-tyrosine + phosphate = [glutamine synthetase]-L-tyrosine + ADP. It carries out the reaction [glutamine synthetase]-L-tyrosine + ATP = [glutamine synthetase]-O(4)-(5'-adenylyl)-L-tyrosine + diphosphate. Involved in the regulation of glutamine synthetase GlnA, a key enzyme in the process to assimilate ammonia. When cellular nitrogen levels are high, the C-terminal adenylyl transferase (AT) inactivates GlnA by covalent transfer of an adenylyl group from ATP to specific tyrosine residue of GlnA, thus reducing its activity. Conversely, when nitrogen levels are low, the N-terminal adenylyl removase (AR) activates GlnA by removing the adenylyl group by phosphorolysis, increasing its activity. The regulatory region of GlnE binds the signal transduction protein PII (GlnB) which indicates the nitrogen status of the cell. This Bartonella quintana (strain Toulouse) (Rochalimaea quintana) protein is Bifunctional glutamine synthetase adenylyltransferase/adenylyl-removing enzyme.